The following is a 109-amino-acid chain: Large ribosomal subunit protein uL24 (109 aa).

The tract at residues 1-24 (MANVTTDIKRNDTVAVTSGKDKGK) is disordered.

It belongs to the universal ribosomal protein uL24 family. As to quaternary structure, part of the 50S ribosomal subunit.

Its function is as follows. One of two assembly initiator proteins, it binds directly to the 5'-end of the 23S rRNA, where it nucleates assembly of the 50S subunit. Functionally, one of the proteins that surrounds the polypeptide exit tunnel on the outside of the subunit. The polypeptide is Large ribosomal subunit protein uL24 (Koribacter versatilis (strain Ellin345)).